We begin with the raw amino-acid sequence, 197 residues long: Holliday junction branch migration complex subunit RuvA (197 aa).

The segment at M1 to H63 is domain I. A domain II region spans residues T64–Q142. The segment at Q142–A146 is flexible linker. Residues K147–G197 form a domain III region.

The protein belongs to the RuvA family. In terms of assembly, homotetramer. Forms an RuvA(8)-RuvB(12)-Holliday junction (HJ) complex. HJ DNA is sandwiched between 2 RuvA tetramers; dsDNA enters through RuvA and exits via RuvB. An RuvB hexamer assembles on each DNA strand where it exits the tetramer. Each RuvB hexamer is contacted by two RuvA subunits (via domain III) on 2 adjacent RuvB subunits; this complex drives branch migration. In the full resolvosome a probable DNA-RuvA(4)-RuvB(12)-RuvC(2) complex forms which resolves the HJ.

The protein localises to the cytoplasm. In terms of biological role, the RuvA-RuvB-RuvC complex processes Holliday junction (HJ) DNA during genetic recombination and DNA repair, while the RuvA-RuvB complex plays an important role in the rescue of blocked DNA replication forks via replication fork reversal (RFR). RuvA specifically binds to HJ cruciform DNA, conferring on it an open structure. The RuvB hexamer acts as an ATP-dependent pump, pulling dsDNA into and through the RuvAB complex. HJ branch migration allows RuvC to scan DNA until it finds its consensus sequence, where it cleaves and resolves the cruciform DNA. The sequence is that of Holliday junction branch migration complex subunit RuvA from Streptococcus uberis (strain ATCC BAA-854 / 0140J).